Consider the following 143-residue polypeptide: Large ribosomal subunit protein uL11 (143 aa).

It belongs to the universal ribosomal protein uL11 family. As to quaternary structure, part of the ribosomal stalk of the 50S ribosomal subunit. Interacts with L10 and the large rRNA to form the base of the stalk. L10 forms an elongated spine to which L12 dimers bind in a sequential fashion forming a multimeric L10(L12)X complex. One or more lysine residues are methylated.

In terms of biological role, forms part of the ribosomal stalk which helps the ribosome interact with GTP-bound translation factors. The chain is Large ribosomal subunit protein uL11 from Pseudomonas paraeruginosa (strain DSM 24068 / PA7) (Pseudomonas aeruginosa (strain PA7)).